The following is a 167-amino-acid chain: Peroxiredoxin Pen c 3 (167 aa).

The region spanning 3–167 (LKAGDSFPEG…SRADHVLKQL (165 aa)) is the Thioredoxin domain. The active-site Cysteine sulfenic acid (-SOH) intermediate is the cysteine 60.

This sequence belongs to the peroxiredoxin family. Prx5 subfamily. Homodimer; disulfide-linked, upon oxidation.

The catalysed reaction is a hydroperoxide + [thioredoxin]-dithiol = an alcohol + [thioredoxin]-disulfide + H2O. Functionally, thiol-specific peroxidase that catalyzes the reduction of hydrogen peroxide and organic hydroperoxides to water and alcohols, respectively. Plays a role in cell protection against oxidative stress by detoxifying peroxides and as sensor of hydrogen peroxide-mediated signaling events. The polypeptide is Peroxiredoxin Pen c 3 (Penicillium citrinum).